An 82-amino-acid chain; its full sequence is ATP synthase subunit c (82 aa).

A run of 2 helical transmembrane segments spans residues 7–27 (FVAL…CIGI) and 53–73 (FLLA…AMMF).

The protein belongs to the ATPase C chain family. As to quaternary structure, F-type ATPases have 2 components, F(1) - the catalytic core - and F(0) - the membrane proton channel. F(1) has five subunits: alpha(3), beta(3), gamma(1), delta(1), epsilon(1). F(0) has three main subunits: a(1), b(2) and c(10-14). The alpha and beta chains form an alternating ring which encloses part of the gamma chain. F(1) is attached to F(0) by a central stalk formed by the gamma and epsilon chains, while a peripheral stalk is formed by the delta and b chains.

The protein localises to the cell inner membrane. Functionally, f(1)F(0) ATP synthase produces ATP from ADP in the presence of a proton or sodium gradient. F-type ATPases consist of two structural domains, F(1) containing the extramembraneous catalytic core and F(0) containing the membrane proton channel, linked together by a central stalk and a peripheral stalk. During catalysis, ATP synthesis in the catalytic domain of F(1) is coupled via a rotary mechanism of the central stalk subunits to proton translocation. In terms of biological role, key component of the F(0) channel; it plays a direct role in translocation across the membrane. A homomeric c-ring of between 10-14 subunits forms the central stalk rotor element with the F(1) delta and epsilon subunits. This is ATP synthase subunit c from Aromatoleum aromaticum (strain DSM 19018 / LMG 30748 / EbN1) (Azoarcus sp. (strain EbN1)).